Consider the following 968-residue polypeptide: Isoleucine--tRNA ligase (968 aa).

Residues 68-78 (PYANGALHMGH) carry the 'HIGH' region motif. Glutamate 582 is a binding site for L-isoleucyl-5'-AMP. The short motif at 623 to 627 (KMSKS) is the 'KMSKS' region element. Lysine 626 lines the ATP pocket. Positions 936, 939, 956, and 959 each coordinate Zn(2+).

This sequence belongs to the class-I aminoacyl-tRNA synthetase family. IleS type 1 subfamily. Monomer. Zn(2+) serves as cofactor.

It is found in the cytoplasm. It catalyses the reaction tRNA(Ile) + L-isoleucine + ATP = L-isoleucyl-tRNA(Ile) + AMP + diphosphate. Its function is as follows. Catalyzes the attachment of isoleucine to tRNA(Ile). As IleRS can inadvertently accommodate and process structurally similar amino acids such as valine, to avoid such errors it has two additional distinct tRNA(Ile)-dependent editing activities. One activity is designated as 'pretransfer' editing and involves the hydrolysis of activated Val-AMP. The other activity is designated 'posttransfer' editing and involves deacylation of mischarged Val-tRNA(Ile). This chain is Isoleucine--tRNA ligase, found in Prochlorococcus marinus (strain MIT 9301).